Reading from the N-terminus, the 409-residue chain is Translation initiation factor 2 subunit gamma (409 aa).

A tr-type G domain is found at 6-203 (QPEVNIGLVG…AVQSEIPTPE (198 aa)). A G1 region spans residues 15–22 (GHVDHGKT). Mg(2+) contacts are provided by Asp18, Thr22, Gly43, and Ser45. Position 18–23 (18–23 (DHGKTT)) interacts with GTP. Residues 43–47 (GISIR) are G2. The segment at 90–93 (DAPG) is G3. GTP contacts are provided by residues 146–149 (NKVD) and 181–183 (SAG). Positions 146-149 (NKVD) are G4. The interval 181–183 (SAG) is G5.

It belongs to the TRAFAC class translation factor GTPase superfamily. Classic translation factor GTPase family. EIF2G subfamily. Heterotrimer composed of an alpha, a beta and a gamma chain. It depends on Mg(2+) as a cofactor.

The enzyme catalyses GTP + H2O = GDP + phosphate + H(+). Its function is as follows. eIF-2 functions in the early steps of protein synthesis by forming a ternary complex with GTP and initiator tRNA. This Haloarcula marismortui (strain ATCC 43049 / DSM 3752 / JCM 8966 / VKM B-1809) (Halobacterium marismortui) protein is Translation initiation factor 2 subunit gamma.